Consider the following 181-residue polypeptide: Protein GrpE (181 aa).

This sequence belongs to the GrpE family. In terms of assembly, homodimer.

The protein resides in the cytoplasm. Participates actively in the response to hyperosmotic and heat shock by preventing the aggregation of stress-denatured proteins, in association with DnaK and GrpE. It is the nucleotide exchange factor for DnaK and may function as a thermosensor. Unfolded proteins bind initially to DnaJ; upon interaction with the DnaJ-bound protein, DnaK hydrolyzes its bound ATP, resulting in the formation of a stable complex. GrpE releases ADP from DnaK; ATP binding to DnaK triggers the release of the substrate protein, thus completing the reaction cycle. Several rounds of ATP-dependent interactions between DnaJ, DnaK and GrpE are required for fully efficient folding. The chain is Protein GrpE from Verminephrobacter eiseniae (strain EF01-2).